Reading from the N-terminus, the 94-residue chain is Bacterial microcompartment shell protein PduA (94 aa).

Residues 5–89 (ALGMVETKGL…PHTDVEKILP (85 aa)) enclose the BMC domain.

The protein belongs to the bacterial microcompartments protein family. In terms of assembly, homohexamer with a central pore of about 5.6 Angstroms in diameter. The hexamers pack against each other in arrays. Interacts with the N-terminus of PduP which targets PduP to the BMC. Modeling suggests PduC, PduD, PduE, PduL and PduP interact with a cleft formed by the C-terminal segments of 2 adjacent PduA subunits (on the BMC luminal side) in the hexamer.

Its subcellular location is the bacterial microcompartment. It participates in polyol metabolism; 1,2-propanediol degradation. In terms of biological role, one of the major shell proteins of the bacterial microcompartment (BMC) dedicated to 1,2-propanediol (1,2-PD) degradation. At least one of PduA or PduJ is required for BMC assembly; it must be encoded as the first gene in the pdu operon. Not required for structural integrity of BMCs, it is required to mitigate propionaldehyde toxicity. Controls diffusion of 1,2-PD into and propionaldehyde out of the BMC shell; residue 40 is particularly important for pore permeability. Overexpression of this protein leads to aberrant filaments that extend the length of the cell, cross the cleavage furrow and impair division. The filaments form nanotubes with a hollow center. The isolated BMC shell component protein ratio for J:A:B':B:K:T:U is approximately 15:10:7:6:1:1:2. Edge residues (particularly Lys-26) are important for function and assembly of the BMC, and influence array formation by hexamers. Interaction with PduA allows encapsulation of at least PduP in BMCs. Probably also targets PduD to the BMC. PduA is probably the hub for binding multiple enzymes to the interior of the BMC; modeling suggests PduC, PduD, PduE, PduG, PduL and PduP are targeted to PduA. Its function is as follows. The 1,2-PD-specific bacterial microcompartment (BMC) concentrates low levels of 1,2-PD catabolic enzymes, concentrates volatile reaction intermediates thus enhancing pathway flux and keeps the level of toxic, mutagenic propionaldehyde low. This chain is Bacterial microcompartment shell protein PduA, found in Salmonella typhimurium (strain LT2 / SGSC1412 / ATCC 700720).